Here is a 340-residue protein sequence, read N- to C-terminus: Phosphoribosylformylglycinamidine cyclo-ligase (340 aa).

This sequence belongs to the AIR synthase family.

The protein localises to the cytoplasm. The enzyme catalyses 2-formamido-N(1)-(5-O-phospho-beta-D-ribosyl)acetamidine + ATP = 5-amino-1-(5-phospho-beta-D-ribosyl)imidazole + ADP + phosphate + H(+). Its pathway is purine metabolism; IMP biosynthesis via de novo pathway; 5-amino-1-(5-phospho-D-ribosyl)imidazole from N(2)-formyl-N(1)-(5-phospho-D-ribosyl)glycinamide: step 2/2. In Streptococcus pneumoniae (strain Taiwan19F-14), this protein is Phosphoribosylformylglycinamidine cyclo-ligase.